A 306-amino-acid polypeptide reads, in one-letter code: Triplex capsid protein 2 (306 aa).

It belongs to the herpesviridae TRX2 protein family. As to quaternary structure, interacts with TRX1 and major capisd protein/MCP.

Its subcellular location is the virion. The protein localises to the host nucleus. Its function is as follows. Structural component of the T=16 icosahedral capsid. The capsid is composed of pentamers and hexamers of major capsid protein/MCP, which are linked together by heterotrimers called triplexes. These triplexes are formed by a single molecule of triplex protein 1/TRX1 and two copies of triplex protein 2/TRX2. Additionally, TRX1 is required for efficient transport of TRX2 to the nucleus, which is the site of capsid assembly. The sequence is that of Triplex capsid protein 2 from Human cytomegalovirus (strain AD169) (HHV-5).